A 116-amino-acid chain; its full sequence is Large ribosomal subunit protein bL20 (116 aa).

Belongs to the bacterial ribosomal protein bL20 family.

Functionally, binds directly to 23S ribosomal RNA and is necessary for the in vitro assembly process of the 50S ribosomal subunit. It is not involved in the protein synthesizing functions of that subunit. The polypeptide is Large ribosomal subunit protein bL20 (Hydrogenobaculum sp. (strain Y04AAS1)).